Reading from the N-terminus, the 566-residue chain is Oxygen-dependent choline dehydrogenase (566 aa).

Residue 7–36 participates in FAD binding; that stretch reads DYIICGAGSAGNVLATRLTEDPDVTVLLLE. Residues 180-202 form a disordered region; sequence NGYQQEGFGPMDRTVTPKGRRAS. The active-site Proton acceptor is His-474.

It belongs to the GMC oxidoreductase family. Requires FAD as cofactor.

It carries out the reaction choline + A = betaine aldehyde + AH2. The enzyme catalyses betaine aldehyde + NAD(+) + H2O = glycine betaine + NADH + 2 H(+). It functions in the pathway amine and polyamine biosynthesis; betaine biosynthesis via choline pathway; betaine aldehyde from choline (cytochrome c reductase route): step 1/1. In terms of biological role, involved in the biosynthesis of the osmoprotectant glycine betaine. Catalyzes the oxidation of choline to betaine aldehyde and betaine aldehyde to glycine betaine at the same rate. In Burkholderia lata (strain ATCC 17760 / DSM 23089 / LMG 22485 / NCIMB 9086 / R18194 / 383), this protein is Oxygen-dependent choline dehydrogenase.